A 914-amino-acid chain; its full sequence is Probable dipeptidyl-aminopeptidase B (914 aa).

Residues methionine 1–serine 10 show a composition bias toward basic and acidic residues. The segment at methionine 1–arginine 63 is disordered. The Cytoplasmic segment spans residues methionine 1 to arginine 91. Over residues serine 20–serine 35 the composition is skewed to low complexity. Positions glutamine 45–methionine 56 are enriched in polar residues. The chain crosses the membrane as a helical; Signal-anchor for type II membrane protein span at residues isoleucine 92–leucine 112. Residues threonine 113–valine 914 lie on the Vacuolar side of the membrane. Asparagine 348, asparagine 565, and asparagine 639 each carry an N-linked (GlcNAc...) asparagine glycan. Serine 753 functions as the Charge relay system in the catalytic mechanism. Asparagine 807 carries an N-linked (GlcNAc...) asparagine glycan. Residues aspartate 830 and histidine 863 each act as charge relay system in the active site.

This sequence belongs to the peptidase S9B family.

It is found in the vacuole membrane. It carries out the reaction Release of an N-terminal dipeptide, Xaa-Yaa-|-Zaa-, from a polypeptide, preferentially when Yaa is Pro, provided Zaa is neither Pro nor hydroxyproline.. Its function is as follows. Type IV dipeptidyl-peptidase which removes N-terminal dipeptides sequentially from polypeptides having unsubstituted N-termini provided that the penultimate residue is proline. The chain is Probable dipeptidyl-aminopeptidase B (dapB) from Aspergillus clavatus (strain ATCC 1007 / CBS 513.65 / DSM 816 / NCTC 3887 / NRRL 1 / QM 1276 / 107).